A 576-amino-acid polypeptide reads, in one-letter code: MNIKNILLKNVKNALKPSNLDLRNLKIKKTKFKKFGNYQIDGIFSILNKNKINLNELLNKILPIINMKLINVSEKIEFVKPGYINIFLKKSWIEDNLLKIYHSNKLGISKLKKKTIIIDYSSPNIGKEMHVGHMRSTIIGDSISLILELLGHKVIRANHIGDWGNQFGMLLAYFNEKQNLKFSEITCTDLENYYINAKKKYDKDLEFKKKSQFFTLKLQKKEKDCINIWKKITNLSIENNQKIYDQLNIKLNKTHIMGESLYNDFVPYIISDLPKKNLAINKSGNIMVILNNFKNKQGKSMGVILKKRNGTYLYSVIDIACIKYRYDFFKAQKIIYYTDSRQSQHLLQVFDIVRKAKYIPNFVKLEHHKFGMVLKKDKTPFKTRSGDTIKLSDLLKKSKEKAKKLIIKKNPNTSIDEIESLSQAIGIGSIKYFELSKNRETDYIFNWDNILSFNGNTAPYIQYAYTRVISLIKKNKLKNKNNVKFLLKKEEEIDLSICLLQFEEIINDVSKLGTPHILCNYLYDLSKTFSVFYENCSIIKTKEESVKNSRLFLSILTSRTLKVGLELLGIPMVEKM.

The 'HIGH' region signature appears at P123–H133.

The protein belongs to the class-I aminoacyl-tRNA synthetase family. Monomer.

Its subcellular location is the cytoplasm. The enzyme catalyses tRNA(Arg) + L-arginine + ATP = L-arginyl-tRNA(Arg) + AMP + diphosphate. In Wigglesworthia glossinidia brevipalpis, this protein is Arginine--tRNA ligase.